The sequence spans 617 residues: MGDPLLPGSTGLGSGGTAAATGGTGTTGTGLGSGGTSGTERPPSPARLTHTSEKHPKVTLTELNMLRRHRELCDVVLNVGGRKIFAHRVILSACSSYFCAMFTGELEESRQTEVTIRDIDENAMELLIDFCYTAHIIVEESNVQTLLPAACLLQLVEIQDICCEFLKRQLDPTNCLGIRAFADTHSCRELLRIADKFTQHNFQEVMESEEFLLLPVGQLVDIICSDELNVRSEEQVFNAVMSWLKYNVAERRQHLAQVLQHVRLPLLSPKFLVGTVGSDLLVRSDEACRDLVDEAKNYLLLPQERPLMQGPRTRPRKPTRRGEVLFAVGGWCSGDAIASVERFDPQTNDWKMVAPMSKRRCGVGVAVLNDLLYAVGGHDGQSYLNSIERYDPQTNQWSCDVAPTTSCRTSVGVAVLDGFLYAVGGQDGVQCLNHVERYDPKENKWSKVAPMTTRRLGVAVAVLSGHLYAIGGSDGQCPLNTVERYDPRQNKWVAVNPMSTRRKHLGCAVFNNYIYAVGGRDDCMELSSAERYNPLTNTWSPIVAMTSRRSGVGLAVVNGQLYAVGGFDGSAYLKTIEVYDPETNQWRLCGCMNYRRLGGGVGVMRAPQTENYMWCAK.

The segment at 1 to 55 is disordered; the sequence is MGDPLLPGSTGLGSGGTAAATGGTGTTGTGLGSGGTSGTERPPSPARLTHTSEKH. The segment covering 10–37 has biased composition (gly residues); the sequence is TGLGSGGTAAATGGTGTTGTGLGSGGTS. The BTB domain maps to 73 to 140; that stretch reads CDVVLNVGGR…CYTAHIIVEE (68 aa). In terms of domain architecture, BACK spans 175-277; sequence CLGIRAFADT…SPKFLVGTVG (103 aa). Kelch repeat units lie at residues 324-370, 372-418, 419-465, 467-512, 514-559, and 560-606; these read VLFA…VLND, LYAV…VLDG, FLYA…VLSG, LYAI…VFNN, IYAV…VVNG, and QLYA…VMRA.

It participates in protein modification; protein ubiquitination. In terms of biological role, probable substrate-specific adapter of an E3 ubiquitin-protein ligase complex which mediates the ubiquitination and subsequent proteasomal degradation of target proteins. May have a role in synapse differentiation and growth. This Drosophila mojavensis (Fruit fly) protein is Kelch-like protein diablo.